The sequence spans 305 residues: Glycine--tRNA ligase alpha subunit (305 aa).

This sequence belongs to the class-II aminoacyl-tRNA synthetase family. As to quaternary structure, tetramer of two alpha and two beta subunits.

The protein resides in the cytoplasm. The enzyme catalyses tRNA(Gly) + glycine + ATP = glycyl-tRNA(Gly) + AMP + diphosphate. This is Glycine--tRNA ligase alpha subunit from Streptococcus gordonii (strain Challis / ATCC 35105 / BCRC 15272 / CH1 / DL1 / V288).